A 131-amino-acid chain; its full sequence is Small ribosomal subunit protein uS8 (131 aa).

The protein belongs to the universal ribosomal protein uS8 family. As to quaternary structure, part of the 30S ribosomal subunit. Contacts proteins S5 and S12.

One of the primary rRNA binding proteins, it binds directly to 16S rRNA central domain where it helps coordinate assembly of the platform of the 30S subunit. This Desulforudis audaxviator (strain MP104C) protein is Small ribosomal subunit protein uS8.